The primary structure comprises 90 residues: Mitochondrial import inner membrane translocase subunit Tim8 A (90 aa).

A Twin CX3C motif motif is present at residues 36 to 59 (CWEKCMDKPGPKLDSRTEVCFVNC). 2 disulfide bridges follow: Cys-36/Cys-59 and Cys-40/Cys-55.

It belongs to the small Tim family. In terms of assembly, heterohexamer; composed of 3 copies of TIMM8A and 3 copies of TIMM13, named soluble 70 kDa complex. Associates with the TIM22 complex, whose core is composed of TIMM22.

The protein localises to the mitochondrion inner membrane. Functionally, mitochondrial intermembrane chaperone that participates in the import and insertion of some multi-pass transmembrane proteins into the mitochondrial inner membrane. Also required for the transfer of beta-barrel precursors from the TOM complex to the sorting and assembly machinery (SAM complex) of the outer membrane. Acts as a chaperone-like protein that protects the hydrophobic precursors from aggregation and guide them through the mitochondrial intermembrane space. The TIMM8-TIMM13 complex mediates the import of some proteins while the predominant TIMM9-TIMM10 70 kDa complex mediates the import of much more proteins. The sequence is that of Mitochondrial import inner membrane translocase subunit Tim8 A (timm8a) from Danio rerio (Zebrafish).